A 340-amino-acid chain; its full sequence is Phosphoribosylformylglycinamidine cyclo-ligase (340 aa).

This sequence belongs to the AIR synthase family.

The protein localises to the cytoplasm. It catalyses the reaction 2-formamido-N(1)-(5-O-phospho-beta-D-ribosyl)acetamidine + ATP = 5-amino-1-(5-phospho-beta-D-ribosyl)imidazole + ADP + phosphate + H(+). The protein operates within purine metabolism; IMP biosynthesis via de novo pathway; 5-amino-1-(5-phospho-D-ribosyl)imidazole from N(2)-formyl-N(1)-(5-phospho-D-ribosyl)glycinamide: step 2/2. This Streptococcus pneumoniae (strain Taiwan19F-14) protein is Phosphoribosylformylglycinamidine cyclo-ligase.